Consider the following 1191-residue polypeptide: MADDDLSSLAPVAPAVWMFFLKKTRELADIVAAMSLCDKATPVVIAPLLIDLTVDRDFCGAVRTPMSTYEGGVLTKVTSFCPFAFFFHNTDEILDVVEDHGDVVHLCDDARRRFGVQAFSPLANRDRTDVDVLCDELGIAPAEYTGHVVCGNGLKELLYAGQLIPCPEEAVKVQVGAVDGVKVPLYPYTLFSGGADAAHADGPSAAVACDDPWVLEHGFYDPALSEALFYFMFTSWGQSLRVCETSRLIEAGLQQFVEDTQQTVKLTPFKKYHGYTSQKLTAVERDQLMTVDAVCSELAFSYASIYLDSVYEFSTASNFLEWPLVKNAKTHADLLDNLRDFQLHLAKHIAALIFSSNSILYQTRIVFVPSAGKGANSNPSAQDSLLKSIRFFNGLTGMYDDILNDAKKTIRFEGAVGRDEKYSPHHLAYFCGTSPQLFSTLMWFFNRMSIYSTGVTSGDTVFSHIVNAGSKLCGACGGRCCHTCYATSFIRVNTRLPGIPKQIKKEPVVVTLLSRAFADADLLGNYGKRYGLESREAGDGGGGGAGGRTDEVAAGPPAGGASGLNFVSVDRMKYLGQVLDYCKKNSLIDAITGEDIINVRTKRDFVATVTALNQTIDDAVCRFAMDVRRSGHGRDEISGSTQSFNLDLSPYATAFSPVLSFQYYRTMFSIIQNLALINAASYVVDNPLTTAQISKWVTLHFQSICGAFGTTPLKKGFLNVKDTKNLKSVEFERIMDFRSFQETGRYRKISTEIKSCKMSVQSLKSCRIKNRPISKTPQSSVFFKKGALQRKNPIKGCLSFLLFRCHEKLFPRCGLSCLEFWQRVLQNSLPRSVNVGKVEDFDNLVRFLLTVTDDYDESDVVDIQPDCLLSYVENRFHNKFLYMFGFRDYMSTIQGMSTRLTPQNHSQFPCLLKDAPKFASIAEYVLHFKKMKLDGVKAPQVATITREPVLKKLFDGRSLVSVSFAVEKYSSSMGTRDVFQFGQIGYYVGSGVDRSLNTGSMGTQDYRFMRYRYIIATKLVDVLIRRSRRENVMYDRDVVRSRVLAALDSTGLDVDPELAAIAELMEGRDEGDIPEIDDILFYVDQQEYIARSMYRKMRSLAERGVTDFSLASLREATATNATAAGSAAGGGGSATEGGGGGAAADESGPMYDFSALFSRRDEAEDVNAGLINGDDVRGDDEFELPSKRSRL.

Residues 820–821 (FW) carry the Required for filament formation motif. Disordered stretches follow at residues 1122–1146 (TAAG…AADE) and 1168–1191 (AGLI…RSRL). Residues 1127 to 1142 (AAGGGGSATEGGGGGA) show a composition bias toward gly residues. Positions 1173-1191 (GDDVRGDDEFELPSKRSRL) are required for nuclear localization.

The protein belongs to the herpesviridae major DNA-binding protein family. In terms of assembly, homooligomers. Forms double-helical filaments necessary for the formation of replication compartments within the host nucleus. Interacts with the origin-binding protein. Interacts with the helicase primase complex; this interaction stimulates primer synthesis activity of the helicase-primase complex. Interacts with the DNA polymerase. Interacts with the alkaline exonuclease; this interaction increases its nuclease processivity.

It is found in the host nucleus. Functionally, single-stranded DNA-binding protein required for DNA replication. Its function is as follows. Plays several crucial roles in viral infection. Participates in the opening of the viral DNA origin to initiate replication by interacting with the origin-binding protein. May disrupt loops, hairpins and other secondary structures present on ssDNA to reduce and eliminate pausing of viral DNA polymerase at specific sites during elongation. Promotes viral DNA recombination by performing strand-transfer, characterized by the ability to transfer a DNA strand from a linear duplex to a complementary single-stranded DNA circle. Can also catalyze the renaturation of complementary single strands. Additionally, reorganizes the host cell nucleus, leading to the formation of prereplicative sites and replication compartments. This process is driven by the protein which can form double-helical filaments in the absence of DNA. This Mus musculus (Mouse) protein is Major DNA-binding protein.